The following is a 297-amino-acid chain: MSEMESDILRAGWEAWRRNPVTAVPFVLHGLSVIAVSIATLLSAIYAIMPELPAAILSGDFGDEAFKQMFGEFLKRCLGNIELLGVTFVFGLVIVAALAALFKAWWIKLCYDALEGKAILSTAFHHAKSLFVPLFKFELILTLLIGIAFIPLINLGLDFFRNIHMLTKEAALYYVISFMIWSAFLGIFAITIQFLFTFVPYAIVIDLKGTLSGIRRGVMVLRHNLVDTIIMWLLVGLAGMALQVAAYPFRFFGFWGTLAGTLVAVILGWVAVMPITTCWWVELYRRRSKTLNSFPNG.

The next 6 helical transmembrane spans lie at 26-48, 80-102, 134-156, 185-205, 225-247, and 262-284; these read FVLH…IYAI, NIEL…AALF, LFKF…INLG, LGIF…AIVI, LVDT…VAAY, and LVAV…VELY.

The protein localises to the cell membrane. This is an uncharacterized protein from Archaeoglobus fulgidus (strain ATCC 49558 / DSM 4304 / JCM 9628 / NBRC 100126 / VC-16).